A 303-amino-acid chain; its full sequence is Bifunctional protein FolD 2 (303 aa).

NADP(+) is bound by residues 169 to 171, serine 194, and isoleucine 235; that span reads GRS.

It belongs to the tetrahydrofolate dehydrogenase/cyclohydrolase family. In terms of assembly, homodimer.

The catalysed reaction is (6R)-5,10-methylene-5,6,7,8-tetrahydrofolate + NADP(+) = (6R)-5,10-methenyltetrahydrofolate + NADPH. It carries out the reaction (6R)-5,10-methenyltetrahydrofolate + H2O = (6R)-10-formyltetrahydrofolate + H(+). The protein operates within one-carbon metabolism; tetrahydrofolate interconversion. Catalyzes the oxidation of 5,10-methylenetetrahydrofolate to 5,10-methenyltetrahydrofolate and then the hydrolysis of 5,10-methenyltetrahydrofolate to 10-formyltetrahydrofolate. The sequence is that of Bifunctional protein FolD 2 from Ectopseudomonas mendocina (strain ymp) (Pseudomonas mendocina).